Consider the following 366-residue polypeptide: Probable cyclin-dependent kinase 10 (366 aa).

In terms of domain architecture, Protein kinase spans 7 to 293; that stretch reads FEKLDSIGEG…ASDAIKHPFF (287 aa). ATP contacts are provided by residues 13–21 and lysine 36; that span reads IGEGTYGIV. Aspartate 132 acts as the Proton acceptor in catalysis. The span at 315–358 shows a compositional bias: low complexity; the sequence is FKNQNKKQNNNFNNFVQNNQTNQNNQTNQNNQTNQNNKTSQNNN. A disordered region spans residues 315-366; sequence FKNQNKKQNNNFNNFVQNNQTNQNNQTNQNNQTNQNNKTSQNNNMDSYKYSK.

The protein belongs to the protein kinase superfamily. CMGC Ser/Thr protein kinase family. CDC2/CDKX subfamily.

It catalyses the reaction L-seryl-[protein] + ATP = O-phospho-L-seryl-[protein] + ADP + H(+). It carries out the reaction L-threonyl-[protein] + ATP = O-phospho-L-threonyl-[protein] + ADP + H(+). This chain is Probable cyclin-dependent kinase 10 (cdk10), found in Dictyostelium discoideum (Social amoeba).